A 431-amino-acid polypeptide reads, in one-letter code: BEL1-like homeodomain protein 5 (431 aa).

The SR/KY domain stretch occupies residues 80-96 (PIYLKAAQELLNEIVNV). The interval 128–199 (GVAALQMKKA…AVKDMISLQI (72 aa)) is BELL domain. A DNA-binding region (homeobox) is located at residues 228-290 (AWRPQRGLPE…NARVRMWKPL (63 aa)). Residues 302 to 312 (EESRKGSDRYS) show a composition bias toward basic and acidic residues. The interval 302–333 (EESRKGSDRYSTKGSSSKQPYNNTTSNESSNT) is disordered. Residues 313–322 (TKGSSSKQPY) are compositionally biased toward polar residues. A compositionally biased stretch (low complexity) spans 323–333 (NNTTSNESSNT).

The protein belongs to the TALE/BELL homeobox family. In terms of assembly, may form heterodimeric complexes with TALE/KNOX proteins. Interacts with OFP1.

The protein resides in the nucleus. This is BEL1-like homeodomain protein 5 (BLH5) from Arabidopsis thaliana (Mouse-ear cress).